A 482-amino-acid chain; its full sequence is Pre-glycoprotein polyprotein GP complex (482 aa).

A lipid anchor (N-myristoyl glycine; by host) is attached at glycine 2. Residues 2-17 lie on the Extracellular side of the membrane; that stretch reads GQFISFMQEIPIFLQE. Residues 18-32 traverse the membrane as a helical segment; that stretch reads ALNIALVAVSLICIV. Lysine 33 is a topological domain (cytoplasmic). The chain crosses the membrane as a helical span at residues 34-53; sequence GLVNLYRCGLFQLMVFLVLA. Extracellular loops occupy residues 54-58 and 59-421; these read GRSCS and EETF…TLVD. Residue cysteine 57 coordinates Zn(2+). N-linked (GlcNAc...) asparagine; by host glycosylation is found at asparagine 83 and asparagine 95. 5 cysteine pairs are disulfide-bonded: cysteine 92/cysteine 224, cysteine 134/cysteine 162, cysteine 205/cysteine 211, cysteine 269/cysteine 282, and cysteine 353/cysteine 374. N-linked (GlcNAc...) asparagine; by host glycans are attached at residues asparagine 164 and asparagine 176. Asparagine 354, asparagine 362, asparagine 379, and asparagine 384 each carry an N-linked (GlcNAc...) asparagine; by host glycan. Residues 422 to 442 form a helical membrane-spanning segment; the sequence is ICFWSTEFFISTLFLHLIGFP. Residues 443–482 lie on the Cytoplasmic side of the membrane; sequence THEHIRGEGCPLPHRLNSMGGCRCGKYLPLKKPTIWHRRH. 7 residues coordinate Zn(2+): histidine 444, histidine 446, cysteine 452, histidine 456, cysteine 464, cysteine 466, and histidine 482.

Belongs to the arenaviridae GPC protein family. Homotetramer; disulfide-linked. As to quaternary structure, homotetramer. GP2 homotetramers bind through ionic interactions with GP1 homotetramers to form the GP complex together with the stable signal peptide. The GP-C polyprotein interacts with the host protease MBTPS1/SKI-1 resulting in the polyprotein processing. In terms of processing, specific enzymatic cleavages in vivo yield mature proteins. GP-C polyprotein is cleaved in the endoplasmic reticulum by the host protease MBTPS1. Only cleaved glycoprotein is incorporated into virions. Post-translationally, the SSP remains stably associated with the GP complex following cleavage by signal peptidase and plays crucial roles in the trafficking of GP through the secretory pathway. Myristoylation is necessary for GP2-mediated fusion activity.

Its subcellular location is the virion membrane. It is found in the host endoplasmic reticulum membrane. It localises to the host Golgi apparatus membrane. The protein resides in the host cell membrane. Functionally, class I viral fusion protein that directs fusion of viral and host endosomal membranes, leading to delivery of the nucleocapsid into the cytoplasm. Membrane fusion is mediated by irreversible conformational changes induced upon acidification in the endosome. Stable signal peptide (SSP): cleaved and functions as a signal peptide. In addition, it is also retained as the third component of the GP complex. The SSP is required for efficient glycoprotein expression, post-translational maturation cleavage of GP1 and GP2, glycoprotein transport to the cell surface plasma membrane, formation of infectious virus particles, and acid pH-dependent glycoprotein-mediated cell fusion. Its function is as follows. Interacts with the host receptor. In Artibeus (neotropical fruit bats), this protein is Pre-glycoprotein polyprotein GP complex.